Consider the following 428-residue polypeptide: MAENDVDNELLDYEEDEVETAAGGDGSEAPAKKDVKGSYVSIHSSGFRDFLLKPELLRAIVDCGFEHPSEVQHECIPQAILGMDVLCQAKSGMGKTAVFVLATLQQLEPVTGQVSVLVMCHTRELAFQISKEYERFSKYMPNVKVAVFFGGLSIKKDEEVLKKNCPHIVVGTPGRILALARNKSLNLKHIKHFILDECDKMLEQLDMRRDVQEIFRMTPHEKQVMMFSATLSKEIRPVCRKFMQDPMEIFVDDETKLTLHGLQQYYVKLKDNEKNRKLFDLLDVLEFNQVVIFVKSVQRCIALAQLLVEQNFPAIAIHRGMPQEERLSRYQQFKDFQRRILVATNLFGRGMDIERVNIAFNYDMPEDSDTYLHRVARAGRFGTKGLAITFVSDENDAKILNDVQDRFEVNISELPDEIDISSYIEQTR.

Residues 1–19 (MAENDVDNELLDYEEDEVE) are compositionally biased toward acidic residues. The tract at residues 1 to 32 (MAENDVDNELLDYEEDEVETAAGGDGSEAPAK) is disordered. At alanine 2 the chain carries N-acetylalanine. Residue lysine 36 is modified to N6-acetyllysine; alternate. A Glycyl lysine isopeptide (Lys-Gly) (interchain with G-Cter in SUMO2); alternate cross-link involves residue lysine 36. Phosphoserine is present on residues serine 38 and serine 41. A Q motif motif is present at residues 45 to 73 (SGFRDFLLKPELLRAIVDCGFEHPSEVQH). The 174-residue stretch at 76 to 249 (IPQAILGMDV…RKFMQDPMEI (174 aa)) folds into the Helicase ATP-binding domain. Residue 89–96 (AKSGMGKT) participates in ATP binding. At threonine 172 the chain carries Phosphothreonine. The DECD box motif lies at 196-199 (DECD). In terms of domain architecture, Helicase C-terminal spans 261-422 (GLQQYYVKLK…ELPDEIDISS (162 aa)).

It belongs to the DEAD box helicase family. DECD subfamily. As to quaternary structure, homodimer, and heterodimer with DDX39A. DDX39B interacts with the THO subcomplex to form the THO-DDX39B complex which multimerizes into a 28-subunit tetrameric assembly. Component of the transcription/export (TREX) complex at least composed of ALYREF/THOC4, DDX39B, SARNP/CIP29, CHTOP and the THO subcomplex; in the complex interacts with THOC2. THOC1-THOC2-THOC3-DDX39B subcomplex is sufficient for the interaction with export factor NXF1-NXT1. TREX seems to have a dynamic structure involving ATP-dependent remodeling. Within the TREX complex bridges ALYREF/THOC4 and the THO subcomplex, and, in a ATP-dependent manner, ALYREF/THOC4 and SARNP/CIP29. Component of the spliceosome. Interacts directly with U2AF2. Interacts with RBM8A, RNPS1 and SRRM1, FYTTD1/UIF, THOC1, MX1 and POLDIP3. Interacts with LUZP4. Interacts with SARNP/CIP29 (via the C-terminal domain); the interaction is direct and facilitates RNA binding of DDX39B.

The protein resides in the nucleus. Its subcellular location is the nucleus speckle. It localises to the cytoplasm. It catalyses the reaction ATP + H2O = ADP + phosphate + H(+). Involved in nuclear export of spliced and unspliced mRNA. Component of the TREX complex which is thought to couple mRNA transcription, processing and nuclear export, and specifically associates with spliced mRNA and not with unspliced pre-mRNA. The TREX complex is recruited to spliced mRNAs by a transcription-independent mechanism, binds to mRNA upstream of the exon-junction complex (EJC) and is recruited in a splicing- and cap-dependent manner to a region near the 5' end of the mRNA where it functions in mRNA export to the cytoplasm via the TAP/NXF1 pathway. The THOC1-THOC2-THOC3 core complex alone is sufficient to promote ATPase activity of DDX39B; in the complex THOC2 is the only component that directly interacts with DDX39B. Associates with SARNP/CIP29, which facilitates RNA binding of DDX39B and likely plays a role in mRNA export. May undergo several rounds of ATP hydrolysis during assembly of TREX to drive subsequent loading of components such as ALYREF/THOC4 and CHTOP onto mRNA. Also associates with pre-mRNA independent of ALYREF/THOC4. Involved in the nuclear export of intronless mRNA; the ATP-bound form is proposed to recruit export adapter ALYREF/THOC4 to intronless mRNA; its ATPase activity is cooperatively stimulated by RNA and ALYREF/THOC4 and ATP hydrolysis is thought to trigger the dissociation from RNA to allow the association of ALYREF/THOC4 and the NXF1-NXT1 heterodimer. Involved in transcription elongation and genome stability. In terms of biological role, splice factor that is required for the first ATP-dependent step in spliceosome assembly and for the interaction of U2 snRNP with the branchpoint. Has both RNA-stimulated ATP binding/hydrolysis activity and ATP-dependent RNA unwinding activity. Even with the stimulation of RNA, the ATPase activity is weak. Can only hydrolyze ATP but not other NTPs. The RNA stimulation of ATPase activity does not have a strong preference for the sequence and length of the RNA. However, ssRNA stimulates the ATPase activity much more strongly than dsRNA. Can unwind 5' or 3' overhangs or blunt end RNA duplexes in vitro. The ATPase and helicase activities are not influenced by U2AF2; the effect of ALYREF/THOC4 is reported conflictingly. The protein is Spliceosome RNA helicase DDX39B (DDX39B) of Canis lupus familiaris (Dog).